The following is an 892-amino-acid chain: Alanine--tRNA ligase (892 aa).

Zn(2+) contacts are provided by histidine 594, histidine 598, cysteine 702, and histidine 706.

Belongs to the class-II aminoacyl-tRNA synthetase family. Zn(2+) serves as cofactor.

It localises to the cytoplasm. The enzyme catalyses tRNA(Ala) + L-alanine + ATP = L-alanyl-tRNA(Ala) + AMP + diphosphate. Its function is as follows. Catalyzes the attachment of alanine to tRNA(Ala) in a two-step reaction: alanine is first activated by ATP to form Ala-AMP and then transferred to the acceptor end of tRNA(Ala). Also edits incorrectly charged Ser-tRNA(Ala) and Gly-tRNA(Ala) via its editing domain. The protein is Alanine--tRNA ligase of Pyrobaculum neutrophilum (strain DSM 2338 / JCM 9278 / NBRC 100436 / V24Sta) (Thermoproteus neutrophilus).